Reading from the N-terminus, the 1034-residue chain is Platelet endothelial aggregation receptor 1 (1034 aa).

The first 18 residues, 1–18, serve as a signal peptide directing secretion; the sequence is MPLCPLLLLALGLRLTGT. Residues 19–754 lie on the Extracellular side of the membrane; the sequence is LNSNDPNVCT…PTSPVTHNSL (736 aa). The EMI domain occupies 23–101; it reads DPNVCTFWES…YYESRGACVP (79 aa). Intrachain disulfides connect Cys27/Cys89, Cys53/Cys63, and Cys88/Cys99. N-linked (GlcNAc...) asparagine glycosylation is present at Asn150. EGF-like domains follow at residues 181 to 215, 223 to 258, 266 to 301, 309 to 344, and 398 to 433; these read YGPA…PSCN, DGFF…VICS, HGPN…DRCQ, FGQD…DRCT, and HGPG…PHCA. 5 disulfide bridges follow: Cys185–Cys196, Cys189–Cys203, Cys205–Cys214, Cys233–Cys246, and Cys248–Cys257. Asn269 is a glycosylation site (N-linked (GlcNAc...) asparagine). Intrachain disulfides connect Cys270–Cys282, Cys276–Cys289, Cys291–Cys300, Cys313–Cys325, Cys319–Cys332, Cys334–Cys343, Cys402–Cys414, Cys408–Cys421, and Cys423–Cys432. An N-linked (GlcNAc...) asparagine glycan is attached at Asn474. 4 EGF-like domains span residues 484–519, 575–605, 613–648, and 656–691; these read WGFN…AHCQ, SNTC…PSCQ, YGKR…PDCS, and WGLK…PNCL. 12 cysteine pairs are disulfide-bonded: Cys488-Cys500, Cys494-Cys507, Cys509-Cys518, Cys578-Cys586, Cys580-Cys593, Cys595-Cys604, Cys617-Cys629, Cys622-Cys636, Cys638-Cys647, Cys660-Cys672, Cys666-Cys679, and Cys681-Cys690. Residues 755-775 form a helical membrane-spanning segment; sequence GAVIGIAVLGTLVVALIALFI. The Cytoplasmic segment spans residues 776–1034; it reads GYRQWQKGKE…PSPPSRRQDR (259 aa). The interval 823-883 is disordered; that stretch reads TLSQCSPNPP…PHERGASHLD (61 aa). Positions 851 to 883 are enriched in basic and acidic residues; sequence RPSRAHGRENHVTLPADWKHRREPHERGASHLD. Tyr923 carries the post-translational modification Phosphotyrosine. The disordered stretch occupies residues 925–1034; sequence TIRDLPSLPG…PSPPSRRQDR (110 aa). Phosphoserine is present on Ser951. The span at 972–991 shows a compositional bias: polar residues; that stretch reads DSGTYEQPSPLSHNEESLGS. Ser1026 carries the phosphoserine modification.

It belongs to the MEGF family. As to quaternary structure, interacts with SHC2 upon its aggregation-induced tyrosine phosphorylation. Interacts (via extracellular domain) with SVEP1. Phosphorylated in the intracellular domain on tyrosine residues. Phosphorylated on tyrosine residues by SRC. Tyrosine phosphorylation is detected upon platelet aggregation stimulated by collagen, TRAP and thrombin and platelet-platelet contacts but not after platelet activation. Tyrosine phosphorylation enhanced its association with SHC1 and SHC2. Phosphorylated in the intracellular domain on tyrosine residues. Phosphorylated when in the presence of SVEP1. As to expression, expressed in thymocytes, bone marrow stromal and osteogenic cells (at protein level). Strongly expressed in kidney and heart. Moderately expressed in lung, spleen, thymus, liver, brain, testis, skin and stomach. Expressed in hematopoietic stem progenitor cells.

The protein localises to the cell membrane. The protein resides in the cell projection. It localises to the lamellipodium. Required for SVEP1-mediated platelet activation, via its interaction with SVEP1 and subsequent activation of AKT/mTOR signaling. May be involved in the early stages of hematopoiesis. This chain is Platelet endothelial aggregation receptor 1 (Pear1), found in Mus musculus (Mouse).